We begin with the raw amino-acid sequence, 520 residues long: T-box transcription factor TBX22 (520 aa).

The disordered stretch occupies residues 1 to 91 (MALSSRARAF…NSSESLEEKD (91 aa)). The span at 33–49 (PELREKKGGEEEEERRS) shows a compositional bias: basic and acidic residues. Over residues 67–84 (STSASSGCGSDSGYGNSS) the composition is skewed to low complexity. A DNA-binding region (T-box) is located at residues 96–283 (LQGSELWKRF…RNPFAKGFRD (188 aa)).

In terms of tissue distribution, seems to be expressed at a low level.

It is found in the nucleus. Functionally, probable transcriptional regulator involved in developmental processes. This is major determinant crucial to palatogenesis. This Homo sapiens (Human) protein is T-box transcription factor TBX22 (TBX22).